We begin with the raw amino-acid sequence, 216 residues long: MGKKINPLGFRLGANQSHRSLWFAQPKSYSRGLQEDEKIRDCIKNYVQKNMRSGSEGISHIEIKKKIDLIQVIIYIGFPNLLIEGRTRGIEELRINVQKGFRSVNRRLNIAITRVAKPYGQPNILAEYIALQLKNRVSFRKAMKKAIELTEQADTKGIQVQIAGRIDGKEIARVEWIREGRVPLQTIRAKIDHCSYTVRTIYGVLGIKIWIFVDEQ.

The KH type-2 domain maps to 43–116 (IKNYVQKNMR…RLNIAITRVA (74 aa)).

The protein belongs to the universal ribosomal protein uS3 family. In terms of assembly, part of the 30S ribosomal subunit.

It is found in the plastid. It localises to the chloroplast. In Drimys granadensis, this protein is Small ribosomal subunit protein uS3c (rps3).